Here is a 315-residue protein sequence, read N- to C-terminus: Putative ankyrin repeat protein R600 (315 aa).

ANK repeat units follow at residues 79-108 (NECR…NVHV), 118-152 (SGFG…MVGT), 153-182 (DTCN…DIFS), 184-211 (QSKL…DVTD), and 212-240 (DNNS…DMNT).

The chain is Putative ankyrin repeat protein R600 from Acanthamoeba polyphaga mimivirus (APMV).